We begin with the raw amino-acid sequence, 324 residues long: NADH-ubiquinone oxidoreductase chain 1 (324 aa).

8 helical membrane-spanning segments follow: residues 9 to 29 (LINP…LTLV), 75 to 95 (ILFL…WAPM), 106 to 126 (LGIL…LGSG), 146 to 166 (ISYE…SGGY), 178 to 198 (TWLL…TLAE), 212 to 232 (ELVS…FFLA), 259 to 279 (ELMT…FLWM), and 299 to 319 (FLPI…ALAG).

It belongs to the complex I subunit 1 family. Core subunit of respiratory chain NADH dehydrogenase (Complex I) which is composed of 45 different subunits.

It localises to the mitochondrion inner membrane. The catalysed reaction is a ubiquinone + NADH + 5 H(+)(in) = a ubiquinol + NAD(+) + 4 H(+)(out). In terms of biological role, core subunit of the mitochondrial membrane respiratory chain NADH dehydrogenase (Complex I) which catalyzes electron transfer from NADH through the respiratory chain, using ubiquinone as an electron acceptor. Essential for the catalytic activity and assembly of complex I. The polypeptide is NADH-ubiquinone oxidoreductase chain 1 (mt-nd1) (Danio rerio (Zebrafish)).